Here is a 759-residue protein sequence, read N- to C-terminus: ARF GTPase-activating protein GIT2 (759 aa).

One can recognise an Arf-GAP domain in the interval 1–124; that stretch reads MSKRLRSNDV…AFVHRLPCRD (124 aa). A C4-type zinc finger spans residues 11–34; that stretch reads CADCSGPDPSWASVNRGTLICDEC. 3 ANK repeats span residues 132–161, 166–198, and 199–228; these read DLSKQLHSSVRTGNLETCLRLLSLGAQANF, KGSTPLHVASKAGQILQAELLAVYGADPGTHDS, and SGKTPVDYARQGGHRELAERLVEIQYELTD. 2 disordered regions span residues 376 to 422 and 469 to 641; these read VSNQ…DLSD and QSEN…PSTE. Residues 385–402 are compositionally biased toward acidic residues; it reads QDNDQPDYDSVASDEDTD. Residues 451–478 adopt a coiled-coil conformation; sequence NNNLSGELRIMQKKLQTLQSENSSLRRQ. Residues 469 to 489 are compositionally biased toward polar residues; that stretch reads QSENSSLRRQATASACQVQTA. The segment covering 555–569 has biased composition (low complexity); it reads TSSSSLPSFPSTLSW. A compositionally biased stretch (basic and acidic residues) spans 570–583; the sequence is SRDESTRRASRLEK.

In terms of assembly, may form heterooligomers with GIT1. Directly interacts with protein Piccolo/PCLO. Interacts with PPFIA1 and PPFIA2. Interacts with ARHGEF7. Identified in a complex with ARHGEF6 and BIN2. Interacts with PAK3. Interacts with PXN/paxillin. Interacts with TGFB1I1. Forms a complex with EFNB1 and GRB4/NCK2.

Its function is as follows. GTPase-activating protein for ADP ribosylation factor family members, including ARF1. This is ARF GTPase-activating protein GIT2 (Git2) from Rattus norvegicus (Rat).